Consider the following 207-residue polypeptide: Putative 3-methyladenine DNA glycosylase (207 aa).

It belongs to the DNA glycosylase MPG family.

This chain is Putative 3-methyladenine DNA glycosylase, found in Listeria welshimeri serovar 6b (strain ATCC 35897 / DSM 20650 / CCUG 15529 / CIP 8149 / NCTC 11857 / SLCC 5334 / V8).